Here is a 209-residue protein sequence, read N- to C-terminus: ATP-dependent Clp protease proteolytic subunit (209 aa).

Serine 106 acts as the Nucleophile in catalysis. The active site involves histidine 131.

The protein belongs to the peptidase S14 family. As to quaternary structure, fourteen ClpP subunits assemble into 2 heptameric rings which stack back to back to give a disk-like structure with a central cavity, resembling the structure of eukaryotic proteasomes.

The protein resides in the cytoplasm. It carries out the reaction Hydrolysis of proteins to small peptides in the presence of ATP and magnesium. alpha-casein is the usual test substrate. In the absence of ATP, only oligopeptides shorter than five residues are hydrolyzed (such as succinyl-Leu-Tyr-|-NHMec, and Leu-Tyr-Leu-|-Tyr-Trp, in which cleavage of the -Tyr-|-Leu- and -Tyr-|-Trp bonds also occurs).. Cleaves peptides in various proteins in a process that requires ATP hydrolysis. Has a chymotrypsin-like activity. Plays a major role in the degradation of misfolded proteins. The chain is ATP-dependent Clp protease proteolytic subunit from Brucella suis biovar 1 (strain 1330).